Consider the following 143-residue polypeptide: Snake venom vascular endothelial growth factor toxin (143 aa).

The signal sequence occupies residues 1–24 (MAAYLLAVAILFCIQGWPSATVQG). Residue glutamine 25 is modified to Pyrrolidone carboxylic acid. Cystine bridges form between cysteine 38/cysteine 80, cysteine 69/cysteine 115, and cysteine 73/cysteine 117. The segment at 115 to 143 (CECRPRSPGDVNNGRNPEEGEPRARFPFV) is disordered. Positions 130 to 143 (NPEEGEPRARFPFV) are enriched in basic and acidic residues.

Belongs to the PDGF/VEGF growth factor family. Snake venom VEGF subfamily. Homodimer; disulfide-linked. Interacts with VEGF receptor-2 (KDR). Post-translationally, the N-terminus is blocked for N-terminal sequencing, suggesting a Pyrrolidone carboxylic acid at Gln-25. Expressed by the venom gland.

It localises to the secreted. In terms of biological role, snake venom VEGFs that may contribute to venom dispersion and prey subjugation by inducing vascular permeability and hypotension. This protein induces an increase in capillary permeability when intradermally injected into mice. Also provokes a drastic hypotensive effect after intravenous injection. The hypotension is mediated by nitric oxide (NO), which is produced by VEGF-activated endothelium NO synthase. Also induces angiogenesis in vitro. Unlike other crotalid VEGFs, this protein interacts with VEGF receptor-2 (KDR) with a high affinity (Kd=413 pM), whereas no interaction is detected with VEGF receptor-1 (FLT1). This chain is Snake venom vascular endothelial growth factor toxin, found in Protobothrops jerdonii (Jerdon's pitviper).